The chain runs to 122 residues: Large ribosomal subunit protein uL14 (122 aa).

Belongs to the universal ribosomal protein uL14 family. As to quaternary structure, part of the 50S ribosomal subunit. Forms a cluster with proteins L3 and L19. In the 70S ribosome, L14 and L19 interact and together make contacts with the 16S rRNA in bridges B5 and B8.

Functionally, binds to 23S rRNA. Forms part of two intersubunit bridges in the 70S ribosome. The sequence is that of Large ribosomal subunit protein uL14 from Azorhizobium caulinodans (strain ATCC 43989 / DSM 5975 / JCM 20966 / LMG 6465 / NBRC 14845 / NCIMB 13405 / ORS 571).